The primary structure comprises 443 residues: ATP-dependent protease ATPase subunit HslU (443 aa).

Residues Ile19 and 61 to 66 (GVGKTE) contribute to the ATP site. A disordered region spans residues 139-158 (PPRDIGFSQPEEKDSNTRQV). ATP-binding residues include Asp256, Glu321, and Arg393.

This sequence belongs to the ClpX chaperone family. HslU subfamily. In terms of assembly, a double ring-shaped homohexamer of HslV is capped on each side by a ring-shaped HslU homohexamer. The assembly of the HslU/HslV complex is dependent on binding of ATP.

It is found in the cytoplasm. Functionally, ATPase subunit of a proteasome-like degradation complex; this subunit has chaperone activity. The binding of ATP and its subsequent hydrolysis by HslU are essential for unfolding of protein substrates subsequently hydrolyzed by HslV. HslU recognizes the N-terminal part of its protein substrates and unfolds these before they are guided to HslV for hydrolysis. This is ATP-dependent protease ATPase subunit HslU from Cupriavidus taiwanensis (strain DSM 17343 / BCRC 17206 / CCUG 44338 / CIP 107171 / LMG 19424 / R1) (Ralstonia taiwanensis (strain LMG 19424)).